Reading from the N-terminus, the 295-residue chain is Putative enoyl reductase C646.07c (295 aa).

Residues 1–84 (MSITLSSRGR…KDLGPQIGWR (84 aa)) lie on the Cytoplasmic side of the membrane. The chain crosses the membrane as a helical span at residues 85 to 105 (TVFMIEYLGPLVIHLFFILNY). Topologically, residues 106 to 157 (KWIYRKDYNLCLNQKIAFVLVMLHFMKREYESIFVHRFSLATMPLRNIFKNC) are lumenal. The chain crosses the membrane as a helical span at residues 158–178 (AHYHLLSGLFLAYFIYGPWHA). Residues 179 to 186 (NDYIKPNH) lie on the Cytoplasmic side of the membrane. A helical transmembrane segment spans residues 187 to 207 (LLFLIVGWAFAVLSNFRTHII). Residues 208 to 223 (LRDLRPAGSKKRVIPT) lie on the Lumenal side of the membrane. The chain crosses the membrane as a helical span at residues 224–246 (GYGFNLVSFPNYFFESLGWLFFA). Over 247 to 250 (LLTK) the chain is Cytoplasmic. Residues 251 to 268 (SWASWIFLFVGSAQMFVW) traverse the membrane as a helical segment. The Lumenal portion of the chain corresponds to 269-295 (AKKKHARYLKEFPNYPRSRKIMIPFFL).

This sequence belongs to the steroid 5-alpha reductase family.

The protein resides in the endoplasmic reticulum membrane. It catalyses the reaction a (2E)-enoyl-CoA + NADPH + H(+) = a 2,3-saturated acyl-CoA + NADP(+). In Schizosaccharomyces pombe (strain 972 / ATCC 24843) (Fission yeast), this protein is Putative enoyl reductase C646.07c.